Consider the following 240-residue polypeptide: Glycerol uptake facilitator protein 3 (240 aa).

The next 2 helical transmembrane spans lie at 11-31 (LGEFLGTFILILLGDGVVAGV) and 41-61 (AGWVAITLGWGFAVTMGVYAS). The NPA 1 signature appears at 70–72 (NPA). The next 3 membrane-spanning stretches (helical) occupy residues 88-108 (VIPYSAAQIAGGVIGGLVVWL), 137-157 (FWNFISEVIGTFVLVFGLLAF), and 162-182 (FTAGLNPIVVGILIIAIGLSL). Residues 191-193 (NPA) carry the NPA 2 motif. Residues 219 to 239 (WVPIAGPLVGGALGALLFNVL) traverse the membrane as a helical segment.

This sequence belongs to the MIP/aquaporin (TC 1.A.8) family.

The protein localises to the cell membrane. Functionally, transporter that facilitates the transmembrane diffusion of water, dihydroxyacetone, glycerol and H(2)O(2). Is not permeable to urea and D/L-lactic acid. In Lactiplantibacillus plantarum (strain ATCC BAA-793 / NCIMB 8826 / WCFS1) (Lactobacillus plantarum), this protein is Glycerol uptake facilitator protein 3.